The chain runs to 932 residues: Protein translocase subunit SecA (932 aa).

Residues glutamine 87, 105–109 (GEGKT), and aspartate 515 contribute to the ATP site. Zn(2+)-binding residues include cysteine 916, cysteine 918, cysteine 927, and histidine 928.

Belongs to the SecA family. In terms of assembly, monomer and homodimer. Part of the essential Sec protein translocation apparatus which comprises SecA, SecYEG and auxiliary proteins SecDF-YajC and YidC. It depends on Zn(2+) as a cofactor.

It localises to the cell inner membrane. It is found in the cytoplasm. It carries out the reaction ATP + H2O + cellular proteinSide 1 = ADP + phosphate + cellular proteinSide 2.. Its function is as follows. Part of the Sec protein translocase complex. Interacts with the SecYEG preprotein conducting channel. Has a central role in coupling the hydrolysis of ATP to the transfer of proteins into and across the cell membrane, serving both as a receptor for the preprotein-SecB complex and as an ATP-driven molecular motor driving the stepwise translocation of polypeptide chains across the membrane. The sequence is that of Protein translocase subunit SecA from Burkholderia lata (strain ATCC 17760 / DSM 23089 / LMG 22485 / NCIMB 9086 / R18194 / 383).